The following is a 403-amino-acid chain: Phosphopentomutase (403 aa).

Mn(2+) contacts are provided by D13, D298, H303, D339, H340, and H351.

It belongs to the phosphopentomutase family. Requires Mn(2+) as cofactor.

It is found in the cytoplasm. It carries out the reaction 2-deoxy-alpha-D-ribose 1-phosphate = 2-deoxy-D-ribose 5-phosphate. The enzyme catalyses alpha-D-ribose 1-phosphate = D-ribose 5-phosphate. It functions in the pathway carbohydrate degradation; 2-deoxy-D-ribose 1-phosphate degradation; D-glyceraldehyde 3-phosphate and acetaldehyde from 2-deoxy-alpha-D-ribose 1-phosphate: step 1/2. In terms of biological role, isomerase that catalyzes the conversion of deoxy-ribose 1-phosphate (dRib-1-P) and ribose 1-phosphate (Rib-1-P) to deoxy-ribose 5-phosphate (dRib-5-P) and ribose 5-phosphate (Rib-5-P), respectively. This is Phosphopentomutase from Streptococcus pyogenes serotype M4 (strain MGAS10750).